Consider the following 518-residue polypeptide: Phenylacetate 2-hydroxylase (518 aa).

C437 is a binding site for heme.

The protein belongs to the cytochrome P450 family.

It carries out the reaction 2-phenylacetate + reduced [NADPH--hemoprotein reductase] + O2 = (2-hydroxyphenyl)acetate + oxidized [NADPH--hemoprotein reductase] + H2O + H(+). Its pathway is aromatic compound metabolism; phenylacetate degradation. Catalyzes the hydroxylation of phenylacetate to 2-hydroxyphenylacetate in the homogentisate pathway. The homogentisate pathway is used to catabolize phenylacetate and use it as a carbon source. Can also catalyze the hydroxylation of 3-hydroxyphenylacetate to 2,5-dihydroxyphenylacetate (homogentisate) at low efficiency. In Emericella nidulans (Aspergillus nidulans), this protein is Phenylacetate 2-hydroxylase (phacA).